Here is a 103-residue protein sequence, read N- to C-terminus: MASLKKSLFLVLFLGFVSLSICEEEKRENEGNENEEEDENHEEGSEEKRGLLDLAKHVIGIASKLGKRSEEKRYHPFGKRSEEKRYHPFGKRSEEKRYPPIGK.

Positions Met1–Cys22 are cleaved as a signal peptide. A propeptide spanning residues Glu23–Arg49 is cleaved from the precursor. Positions Glu24–Gly50 are disordered. Positions Gly31 to His41 are enriched in acidic residues. At Leu65 the chain carries Leucine amide. The interval Lys67–Lys103 is disordered. The propeptide occupies Ser69–Arg73. A Phenylalanine amide modification is found at Phe77. Residues Ser81–Arg85 constitute a propeptide that is removed on maturation. The residue at position 89 (Phe89) is a Phenylalanine amide. A propeptide spanning residues Ser93–Arg97 is cleaved from the precursor. Residue Ile101 is modified to Isoleucine amide.

It belongs to the frog skin active peptide (FSAP) family. Brevinin subfamily. In terms of tissue distribution, expressed by the skin glands.

The protein resides in the secreted. In terms of biological role, fallaxidin-1.3 shows no antibacterial activity against Gram-positive or Gram-negative bacteria. Does not inhibit the formation of NO by neuronal nitric oxide synthase. Has no effect on splenocyte proliferation or smooth muscle contraction. Functionally, fallaxidin-1.4 shows no antibacterial activity against Gram-positive or Gram-negative bacteria. Does not inhibit the formation of NO by neuronal nitric oxide synthase. Has no effect on splenocyte proliferation or smooth muscle contraction. Its function is as follows. Fallaxidin-3.1 shows antibacterial activity against the Gram-positive bacteria E.faecalis (MIC=100 uM) and L.lactis (MIC=100 uM). No antibacterial activity against the Gram-positive bacteria B.cereus, L.innocua, M.luteus, S.epidermidis, S.uberis and S.aureus, or the Gram-negative bacteria E.cloacae and E.coli. This Litoria fallax (Eastern dwarf tree frog) protein is Preprofallaxidin-6.